The sequence spans 101 residues: Apolipoprotein C-II (101 aa).

The first 22 residues, 1–22 (MGIRYLLVLVLVLLVLGCEVQG), serve as a signal peptide directing secretion. Positions 66–74 (TMDEKIREI) are lipid binding. The tract at residues 78–101 (STAAVSTYAGIFTDQLLSMLKGDQ) is lipoprotein lipase cofactor.

This sequence belongs to the apolipoprotein C2 family. In terms of processing, proapolipoprotein C-II is synthesized as a sialic acid containing glycoprotein which is subsequently desialylated prior to its proteolytic processing. Proapolipoprotein C-II, the major form found in plasma undergoes proteolytic cleavage of its N-terminal hexapeptide to generate apolipoprotein C-II, which occurs as the minor form in plasma.

It is found in the secreted. In terms of biological role, component of chylomicrons, very low-density lipoproteins (VLDL), low-density lipoproteins (LDL), and high-density lipoproteins (HDL) in plasma. Plays an important role in lipoprotein metabolism as an activator of lipoprotein lipase. Both proapolipoprotein C-II and apolipoprotein C-II can activate lipoprotein lipase. The chain is Apolipoprotein C-II (APOC2) from Phoca vitulina (Harbor seal).